The primary structure comprises 476 residues: Cysteine--tRNA ligase (476 aa).

A Zn(2+)-binding site is contributed by cysteine 29. The short motif at proline 31–histidine 41 is the 'HIGH' region element. Zn(2+) contacts are provided by cysteine 209, histidine 234, and glutamate 238. Residues lysine 266 to serine 270 carry the 'KMSKS' region motif. ATP is bound at residue lysine 269.

The protein belongs to the class-I aminoacyl-tRNA synthetase family. It depends on Zn(2+) as a cofactor.

The protein localises to the cytoplasm. The enzyme catalyses tRNA(Cys) + L-cysteine + ATP = L-cysteinyl-tRNA(Cys) + AMP + diphosphate. This Thermococcus kodakarensis (strain ATCC BAA-918 / JCM 12380 / KOD1) (Pyrococcus kodakaraensis (strain KOD1)) protein is Cysteine--tRNA ligase.